Here is a 382-residue protein sequence, read N- to C-terminus: DNA double-strand break repair protein Mre11 (382 aa).

Residues Asp-8, His-10, Asp-49, and Asp-84 each contribute to the Mn(2+) site. The Proton donor role is filled by His-85. The Mn(2+) site is built by His-156, His-187, and His-189.

The protein belongs to the MRE11/RAD32 family. As to quaternary structure, homodimer. Forms a heterotetramer composed of two Mre11 subunits and two Rad50 subunits. Interacts with Rad50 and HerA. It depends on Mn(2+) as a cofactor.

Its activity is regulated as follows. Nuclease activity is regulated by Rad50. Part of the Rad50/Mre11 complex, which is involved in the early steps of DNA double-strand break (DSB) repair. The complex may facilitate opening of the processed DNA ends to aid in the recruitment of HerA and NurA. Mre11 binds to DSB ends and has both double-stranded 3'-5' exonuclease activity and single-stranded endonuclease activity. Recruited immediately to chromosomal DNA after gamma irradiation, and remains DNA bound in the course of DNA repair. This is DNA double-strand break repair protein Mre11 from Sulfolobus acidocaldarius (strain ATCC 33909 / DSM 639 / JCM 8929 / NBRC 15157 / NCIMB 11770).